A 452-amino-acid polypeptide reads, in one-letter code: Cell division protein FtsZ (452 aa).

Residues 24–28 (GAGSN), 111–113 (GTG), Glu-142, Arg-146, and Asp-190 each bind GTP. Residues 432–452 (DQDNKESDIHDIPAFLRKKRD) form a disordered region. A compositionally biased stretch (basic and acidic residues) spans 433-442 (QDNKESDIHD).

Belongs to the FtsZ family. As to quaternary structure, homodimer. Polymerizes to form a dynamic ring structure in a strictly GTP-dependent manner. Interacts directly with several other division proteins.

It is found in the cytoplasm. Essential cell division protein that forms a contractile ring structure (Z ring) at the future cell division site. The regulation of the ring assembly controls the timing and the location of cell division. One of the functions of the FtsZ ring is to recruit other cell division proteins to the septum to produce a new cell wall between the dividing cells. Binds GTP and shows GTPase activity. In Rickettsia conorii (strain ATCC VR-613 / Malish 7), this protein is Cell division protein FtsZ.